The primary structure comprises 206 residues: Holliday junction branch migration complex subunit RuvA (206 aa).

A domain I region spans residues 1-62; the sequence is MYDYLKGLIT…EDAQVLYGFP (62 aa). The domain II stretch occupies residues 63-141; that stretch reads NLDQRELFRK…SLLETIELPS (79 aa). The segment at 142-152 is flexible linker; sequence TEDELPLFGVH. The interval 153–206 is domain III; the sequence is PYKHELEEAILALAALGYSEKELEKIRPLLEDNDKLETTDAYMKQALQLLLKLK.

This sequence belongs to the RuvA family. In terms of assembly, homotetramer. Forms an RuvA(8)-RuvB(12)-Holliday junction (HJ) complex. HJ DNA is sandwiched between 2 RuvA tetramers; dsDNA enters through RuvA and exits via RuvB. An RuvB hexamer assembles on each DNA strand where it exits the tetramer. Each RuvB hexamer is contacted by two RuvA subunits (via domain III) on 2 adjacent RuvB subunits; this complex drives branch migration. In the full resolvosome a probable DNA-RuvA(4)-RuvB(12)-RuvC(2) complex forms which resolves the HJ.

Its subcellular location is the cytoplasm. The RuvA-RuvB-RuvC complex processes Holliday junction (HJ) DNA during genetic recombination and DNA repair, while the RuvA-RuvB complex plays an important role in the rescue of blocked DNA replication forks via replication fork reversal (RFR). RuvA specifically binds to HJ cruciform DNA, conferring on it an open structure. The RuvB hexamer acts as an ATP-dependent pump, pulling dsDNA into and through the RuvAB complex. HJ branch migration allows RuvC to scan DNA until it finds its consensus sequence, where it cleaves and resolves the cruciform DNA. The chain is Holliday junction branch migration complex subunit RuvA from Lysinibacillus sphaericus (strain C3-41).